Consider the following 427-residue polypeptide: Putative ABC transporter substrate-binding protein YesO (427 aa).

It belongs to the bacterial solute-binding protein 1 family.

Functionally, may play a role in the degradation of type I rhamnogalacturonan derived from plant cell walls. This Bacillus subtilis (strain 168) protein is Putative ABC transporter substrate-binding protein YesO (yesO).